Consider the following 102-residue polypeptide: Large ribosomal subunit protein bL21 (102 aa).

The protein belongs to the bacterial ribosomal protein bL21 family. Part of the 50S ribosomal subunit. Contacts protein L20.

This protein binds to 23S rRNA in the presence of protein L20. The protein is Large ribosomal subunit protein bL21 of Stenotrophomonas maltophilia (strain K279a).